Reading from the N-terminus, the 120-residue chain is Ribonuclease P protein component (120 aa).

This sequence belongs to the RnpA family. In terms of assembly, consists of a catalytic RNA component (M1 or rnpB) and a protein subunit.

The catalysed reaction is Endonucleolytic cleavage of RNA, removing 5'-extranucleotides from tRNA precursor.. RNaseP catalyzes the removal of the 5'-leader sequence from pre-tRNA to produce the mature 5'-terminus. It can also cleave other RNA substrates such as 4.5S RNA. The protein component plays an auxiliary but essential role in vivo by binding to the 5'-leader sequence and broadening the substrate specificity of the ribozyme. The protein is Ribonuclease P protein component of Mycobacterium marinum (strain ATCC BAA-535 / M).